Reading from the N-terminus, the 324-residue chain is Carbonic anhydrase, chloroplastic (324 aa).

Belongs to the beta-class carbonic anhydrase family. In terms of assembly, homohexamer.

The protein resides in the plastid. The protein localises to the chloroplast stroma. The catalysed reaction is hydrogencarbonate + H(+) = CO2 + H2O. In terms of biological role, reversible hydration of carbon dioxide. The protein is Carbonic anhydrase, chloroplastic of Hordeum vulgare (Barley).